Consider the following 286-residue polypeptide: 3-hydroxybutyryl-CoA dehydrogenase (286 aa).

It belongs to the 3-hydroxyacyl-CoA dehydrogenase family.

It carries out the reaction 3-hydroxybutanoyl-CoA + NAD(+) = acetoacetyl-CoA + NADH + H(+). The catalysed reaction is (3S)-3-hydroxybutanoyl-CoA + NADP(+) = acetoacetyl-CoA + NADPH + H(+). Its pathway is lipid metabolism; butanoate metabolism. The protein is 3-hydroxybutyryl-CoA dehydrogenase (fadB2) of Mycobacterium tuberculosis (strain CDC 1551 / Oshkosh).